The following is a 410-amino-acid chain: LL-diaminopimelate aminotransferase (410 aa).

Tyr15 and Gly42 together coordinate substrate. Pyridoxal 5'-phosphate-binding positions include Tyr72, 108-109 (AK), Tyr132, Asn187, Tyr218, and 246-248 (SFS). Lys109, Tyr132, and Asn187 together coordinate substrate. Lys249 is subject to N6-(pyridoxal phosphate)lysine. Positions 257 and 292 each coordinate pyridoxal 5'-phosphate. Residues Asn292 and Arg388 each coordinate substrate.

Belongs to the class-I pyridoxal-phosphate-dependent aminotransferase family. LL-diaminopimelate aminotransferase subfamily. Homodimer. Pyridoxal 5'-phosphate serves as cofactor.

The catalysed reaction is (2S,6S)-2,6-diaminopimelate + 2-oxoglutarate = (S)-2,3,4,5-tetrahydrodipicolinate + L-glutamate + H2O + H(+). It participates in amino-acid biosynthesis; L-lysine biosynthesis via DAP pathway; LL-2,6-diaminopimelate from (S)-tetrahydrodipicolinate (aminotransferase route): step 1/1. Functionally, involved in the synthesis of meso-diaminopimelate (m-DAP or DL-DAP), required for both lysine and peptidoglycan biosynthesis. Catalyzes the direct conversion of tetrahydrodipicolinate to LL-diaminopimelate. Is also able to catalyze the reverse reaction in vitro, i.e. the transamination of LL-diaminopimelate with 2-oxoglutarate to produce 2-oxo-6-aminopimelate (in equilibrium with tetrahydrodipicolinate) and glutamate. Has maximal aminotransferase activity using 2-oxoglutarate as an amino group acceptor, and cannot use oxaloacetate instead of 2-oxoglutarate, although 2-oxoadipate can substitute with 21% relative activity. Cannot use m-DAP, lysine or ornithine as the amino-group donor, when using 2-oxoglutarate as the amino-group acceptor. This Methanothermobacter thermautotrophicus (strain ATCC 29096 / DSM 1053 / JCM 10044 / NBRC 100330 / Delta H) (Methanobacterium thermoautotrophicum) protein is LL-diaminopimelate aminotransferase.